The following is a 336-amino-acid chain: Ribosomal RNA large subunit methyltransferase F (336 aa).

This sequence belongs to the methyltransferase superfamily. METTL16/RlmF family.

It is found in the cytoplasm. The enzyme catalyses adenosine(1618) in 23S rRNA + S-adenosyl-L-methionine = N(6)-methyladenosine(1618) in 23S rRNA + S-adenosyl-L-homocysteine + H(+). In terms of biological role, specifically methylates the adenine in position 1618 of 23S rRNA. The protein is Ribosomal RNA large subunit methyltransferase F of Yersinia pestis (strain Pestoides F).